The chain runs to 213 residues: MNKSHHPHRGLLLMVVAPSGVGKTSLTRRLVSDHGDLHLSISATTRDPRPGEHDGRDYHFVSRDKFQGMLAEDAFLEWAEVYGNFYGSPKAPIMDALSRGESVLFDIDFQGAMKVHKQAGADSVLVYILPPSLAEMSRRLHTRSQDSEEVIHRRLSRAKDEVAAWEQFDYVILNDDFDRAYADLAHIYHAERLKRARNPWIGDLVSDLLKEEI.

The 180-residue stretch at 10-189 (GLLLMVVAPS…AYADLAHIYH (180 aa)) folds into the Guanylate kinase-like domain. 17-24 (APSGVGKT) lines the ATP pocket.

This sequence belongs to the guanylate kinase family.

The protein localises to the cytoplasm. The catalysed reaction is GMP + ATP = GDP + ADP. Functionally, essential for recycling GMP and indirectly, cGMP. This chain is Guanylate kinase (gmk), found in Caulobacter vibrioides (strain ATCC 19089 / CIP 103742 / CB 15) (Caulobacter crescentus).